The primary structure comprises 563 residues: Kdo(2)-lipid A phosphoethanolamine 7''-transferase (563 aa).

Residues 1–9 (MRYIKSMTQ) lie on the Cytoplasmic side of the membrane. Residues 10–30 (QKLSFLLALYIGLFMNCAVFY) traverse the membrane as a helical segment. At 31-48 (RRFGSYAQEFTIWKGLSA) the chain is on the periplasmic side. Residues 49 to 69 (VVELGATVLVTFFLLRLLSLF) traverse the membrane as a helical segment. Topologically, residues 70-79 (GRRVWRVLAT) are cytoplasmic. Residues 80 to 100 (LVVLFSAGASYYMTFLNVVIG) traverse the membrane as a helical segment. The Periplasmic segment spans residues 101–117 (YGIIASVMTTDIDLSKE). Residues 118–138 (VVGLHFVLWLIAVSVLPLIFI) traverse the membrane as a helical segment. The Cytoplasmic segment spans residues 139 to 159 (WSNHCRYTLLRQLRTPGQRFR). Residues 160-180 (SAAVVVLAGVMVWAPIRLLDI) form a helical membrane-spanning segment. The Periplasmic portion of the chain corresponds to 181-563 (QQKKVERATG…IPDVQKVAAK (383 aa)).

It belongs to the phosphoethanolamine transferase family. EptB subfamily. Ca(2+) is required as a cofactor.

The protein resides in the cell inner membrane. The catalysed reaction is alpha-Kdo-(2-&gt;4)-alpha-Kdo-(2-&gt;6)-lipid A (E. coli) + a 1,2-diacyl-sn-glycero-3-phosphoethanolamine = 7-O-[2-aminoethoxy(hydroxy)phosphoryl]-alpha-Kdo-(2-&gt;4)-alpha-Kdo-(2-&gt;6)-lipid A + a 1,2-diacyl-sn-glycerol. The enzyme catalyses alpha-Kdo-(2-&gt;4)-alpha-Kdo-(2-&gt;6)-lipid IVA (E. coli) + a 1,2-diacyl-sn-glycero-3-phosphoethanolamine = 7-O-[2-aminoethoxy(hydroxy)phosphoryl]-alpha-Kdo-(2-&gt;4)-alpha-Kdo-(2-&gt;6)-lipid IVA (E. coli) + a 1,2-diacyl-sn-glycerol. Catalyzes the addition of a phosphoethanolamine (pEtN) moiety to the outer 3-deoxy-D-manno-octulosonic acid (Kdo) residue of a Kdo(2)-lipid A. Phosphatidylethanolamines with one unsaturated acyl group function as pEtN donors and the reaction releases diacylglycerol. The polypeptide is Kdo(2)-lipid A phosphoethanolamine 7''-transferase (eptB) (Salmonella typhimurium (strain LT2 / SGSC1412 / ATCC 700720)).